A 156-amino-acid polypeptide reads, in one-letter code: MSWSKVKYFFFDTPEEKEAAQYSYEKEQTDMKKQQDPPEQQDVTFPKAQPKQNVVSIETAKQSSKVVLLEPRTYSEAQGIADHLKGRRAVVINLQRMSTDQAVRIVDFLSGTVYAIGGDIQKIGPKTFMCTPENVDIVGAISELFGEEDDTNIKRW.

Positions Ser23 to Asp36 are enriched in basic and acidic residues. Residues Ser23–Gln49 are disordered.

It belongs to the SepF family. As to quaternary structure, homodimer. Interacts with FtsZ.

The protein resides in the cytoplasm. Functionally, cell division protein that is part of the divisome complex and is recruited early to the Z-ring. Probably stimulates Z-ring formation, perhaps through the cross-linking of FtsZ protofilaments. Its function overlaps with FtsA. In Bacillus anthracis (strain CDC 684 / NRRL 3495), this protein is Cell division protein SepF.